Here is a 419-residue protein sequence, read N- to C-terminus: UDP-N-acetylglucosamine 1-carboxyvinyltransferase (419 aa).

Residue 22-23 (KN) coordinates phosphoenolpyruvate. Residue R95 participates in UDP-N-acetyl-alpha-D-glucosamine binding. The Proton donor role is filled by C119. C119 bears the 2-(S-cysteinyl)pyruvic acid O-phosphothioketal mark. Residues 164 to 167 (KVSV), D308, and I330 contribute to the UDP-N-acetyl-alpha-D-glucosamine site.

The protein belongs to the EPSP synthase family. MurA subfamily.

The protein localises to the cytoplasm. It catalyses the reaction phosphoenolpyruvate + UDP-N-acetyl-alpha-D-glucosamine = UDP-N-acetyl-3-O-(1-carboxyvinyl)-alpha-D-glucosamine + phosphate. It participates in cell wall biogenesis; peptidoglycan biosynthesis. Functionally, cell wall formation. Adds enolpyruvyl to UDP-N-acetylglucosamine. In Rickettsia prowazekii (strain Madrid E), this protein is UDP-N-acetylglucosamine 1-carboxyvinyltransferase.